We begin with the raw amino-acid sequence, 230 residues long: Vacuole-localized protein 4 (230 aa).

The N-terminal stretch at 1-19 (MRVSSAIFTIASGIAAVSA) is a signal peptide.

It is found in the vacuole. Vacuolar protein required for aerial conidiation and conidial maturation. Also involved in blastospore production and cell cycle. Plays a vital role in the secretion of Pr1 proteases for cuticular penetration and hence contributes significantly to host infection and virulence. The chain is Vacuole-localized protein 4 from Beauveria bassiana (strain ARSEF 2860) (White muscardine disease fungus).